The sequence spans 249 residues: MDVLSKSSLKELLAHLERTPLEEAISYKIGTIPYQNVLISRNEYYNQPYPDVTSLIDGVAREGQRNVNGLIMSIISYVVSGSGHYIPNIGYTLLRRSILDILTKHDTGLNTNNINYDMIARNLTVSKMNCEQRKRMLICFKLLAYKDGNLNDYETYLNQNISLKQIAPNFIPGDMRTVMSNSDKLSIVGIPAYRLTQSTELSIRDDNAKSYKIGYVDWYNSSSFLREGNDFNLISLKDRDNKYVRLNGW.

The protein resides in the virion. In terms of biological role, forms the virion spike 'foot' and helps anchor the VP9 spike 'head' protein in the virion. The protein is Structural protein VP10 (Segment-10) of Banna virus (BAV).